Here is a 314-residue protein sequence, read N- to C-terminus: Mitochondrial thiamine pyrophosphate carrier 1 (314 aa).

Helical transmembrane passes span 14 to 30, 84 to 100, 116 to 136, 170 to 186, 217 to 233, and 285 to 302; these read VAAW…GLLA, LLYV…YSLF, LVVG…FDVL, GSIA…SIMF, SAGT…TFPL, and GILV…VSFW. Solcar repeat units lie at residues 14–103, 110–195, and 210–310; these read VAAW…FNRY, EARL…IRIY, and ELAT…AIHY.

This sequence belongs to the mitochondrial carrier (TC 2.A.29) family.

It localises to the mitochondrion inner membrane. In terms of biological role, mitochondrial transporter that mediates uptake of thiamine pyrophosphate (ThPP) into mitochondria. This is Mitochondrial thiamine pyrophosphate carrier 1 (TPC1) from Saccharomyces cerevisiae (strain YJM789) (Baker's yeast).